Reading from the N-terminus, the 421-residue chain is UDP-N-acetylglucosamine 1-carboxyvinyltransferase (421 aa).

22-23 (KN) contacts phosphoenolpyruvate. Arg-93 contributes to the UDP-N-acetyl-alpha-D-glucosamine binding site. Catalysis depends on Cys-117, which acts as the Proton donor. Cys-117 is subject to 2-(S-cysteinyl)pyruvic acid O-phosphothioketal. Residues 122–126 (RPVDL), Asp-308, and Val-330 each bind UDP-N-acetyl-alpha-D-glucosamine.

Belongs to the EPSP synthase family. MurA subfamily.

The protein localises to the cytoplasm. It carries out the reaction phosphoenolpyruvate + UDP-N-acetyl-alpha-D-glucosamine = UDP-N-acetyl-3-O-(1-carboxyvinyl)-alpha-D-glucosamine + phosphate. It participates in cell wall biogenesis; peptidoglycan biosynthesis. Functionally, cell wall formation. Adds enolpyruvyl to UDP-N-acetylglucosamine. This Pseudomonas aeruginosa (strain LESB58) protein is UDP-N-acetylglucosamine 1-carboxyvinyltransferase.